Reading from the N-terminus, the 288-residue chain is Putative aryl-alcohol dehydrogenase AAD10 (288 aa).

This sequence belongs to the aldo/keto reductase family. Aldo/keto reductase 2 subfamily.

The chain is Putative aryl-alcohol dehydrogenase AAD10 (AAD10) from Saccharomyces cerevisiae (strain ATCC 204508 / S288c) (Baker's yeast).